The following is a 240-amino-acid chain: Phosducin-like protein 2 (240 aa).

The Phosducin domain occupies 54-214; that stretch reads QRDKKIDDMS…MLGQAGAVPT (161 aa). Residues S63 and S73 each carry the phosphoserine modification. A thioredoxin fold region spans residues 99–240; it reads FGSVREISGQ…DLEDKSSDFY (142 aa).

This sequence belongs to the phosducin family.

Its subcellular location is the cytoplasm. Functionally, modulates the activation of caspases during apoptosis. This is Phosducin-like protein 2 from Drosophila melanogaster (Fruit fly).